The sequence spans 338 residues: Ketol-acid reductoisomerase (NADP(+)) (338 aa).

Residues 1 to 181 enclose the KARI N-terminal Rossmann domain; it reads MKVFYDKDCD…GGGKAGIIET (181 aa). Residues 24–27, arginine 47, and serine 52 contribute to the NADP(+) site; that span reads YGSQ. Histidine 107 is a catalytic residue. Glycine 133 serves as a coordination point for NADP(+). The KARI C-terminal knotted domain maps to 182–327; sequence NFKEETETDL…AQLRAMMPWI (146 aa). Positions 190, 194, 226, and 230 each coordinate Mg(2+). Serine 251 is a binding site for substrate.

Belongs to the ketol-acid reductoisomerase family. Mg(2+) is required as a cofactor.

The enzyme catalyses (2R)-2,3-dihydroxy-3-methylbutanoate + NADP(+) = (2S)-2-acetolactate + NADPH + H(+). The catalysed reaction is (2R,3R)-2,3-dihydroxy-3-methylpentanoate + NADP(+) = (S)-2-ethyl-2-hydroxy-3-oxobutanoate + NADPH + H(+). It participates in amino-acid biosynthesis; L-isoleucine biosynthesis; L-isoleucine from 2-oxobutanoate: step 2/4. The protein operates within amino-acid biosynthesis; L-valine biosynthesis; L-valine from pyruvate: step 2/4. Involved in the biosynthesis of branched-chain amino acids (BCAA). Catalyzes an alkyl-migration followed by a ketol-acid reduction of (S)-2-acetolactate (S2AL) to yield (R)-2,3-dihydroxy-isovalerate. In the isomerase reaction, S2AL is rearranged via a Mg-dependent methyl migration to produce 3-hydroxy-3-methyl-2-ketobutyrate (HMKB). In the reductase reaction, this 2-ketoacid undergoes a metal-dependent reduction by NADPH to yield (R)-2,3-dihydroxy-isovalerate. The protein is Ketol-acid reductoisomerase (NADP(+)) of Acidovorax ebreus (strain TPSY) (Diaphorobacter sp. (strain TPSY)).